A 496-amino-acid chain; its full sequence is Galactose/methyl galactoside import ATP-binding protein MglA (496 aa).

2 consecutive ABC transporter domains span residues 5–240 (LTIR…VGRT) and 243–496 (KRFP…ARYL). 37-44 (GENGAGKS) contacts ATP.

It belongs to the ABC transporter superfamily. Galactose/methyl galactoside importer (TC 3.A.1.2.3) family. As to quaternary structure, the complex is composed of one ATP-binding protein (MglA), two transmembrane proteins (MglC) and a solute-binding protein (MglB).

Its subcellular location is the cell inner membrane. It catalyses the reaction D-galactose(out) + ATP + H2O = D-galactose(in) + ADP + phosphate + H(+). The enzyme catalyses methyl beta-D-galactoside(out) + ATP + H2O = methyl beta-D-galactoside(in) + ADP + phosphate + H(+). Part of the ABC transporter complex MglABC involved in galactose/methyl galactoside import. Responsible for energy coupling to the transport system. The polypeptide is Galactose/methyl galactoside import ATP-binding protein MglA (Treponema pallidum (strain Nichols)).